The chain runs to 513 residues: ATP synthase subunit alpha 2 (513 aa).

169–176 is an ATP binding site; it reads GDRQCGKT.

This sequence belongs to the ATPase alpha/beta chains family. As to quaternary structure, F-type ATPases have 2 components, CF(1) - the catalytic core - and CF(0) - the membrane proton channel. CF(1) has five subunits: alpha(3), beta(3), gamma(1), delta(1), epsilon(1). CF(0) has three main subunits: a(1), b(2) and c(9-12). The alpha and beta chains form an alternating ring which encloses part of the gamma chain. CF(1) is attached to CF(0) by a central stalk formed by the gamma and epsilon chains, while a peripheral stalk is formed by the delta and b chains.

Its subcellular location is the cell inner membrane. It carries out the reaction ATP + H2O + 4 H(+)(in) = ADP + phosphate + 5 H(+)(out). Its function is as follows. Produces ATP from ADP in the presence of a proton gradient across the membrane. The alpha chain is a regulatory subunit. This chain is ATP synthase subunit alpha 2, found in Paraburkholderia xenovorans (strain LB400).